The chain runs to 452 residues: Cobyrinate a,c-diamide synthase (452 aa).

A GATase cobBQ-type domain is found at 248–441; sequence RVAYALDAAF…LHIHFYQNLL (194 aa). Residue Cys330 is the Nucleophile of the active site.

The protein belongs to the CobB/CbiA family. It depends on Mg(2+) as a cofactor.

It catalyses the reaction cob(II)yrinate + 2 L-glutamine + 2 ATP + 2 H2O = cob(II)yrinate a,c diamide + 2 L-glutamate + 2 ADP + 2 phosphate + 2 H(+). Its pathway is cofactor biosynthesis; adenosylcobalamin biosynthesis; cob(II)yrinate a,c-diamide from sirohydrochlorin (anaerobic route): step 10/10. Functionally, catalyzes the ATP-dependent amidation of the two carboxylate groups at positions a and c of cobyrinate, using either L-glutamine or ammonia as the nitrogen source. This Listeria monocytogenes serotype 4b (strain F2365) protein is Cobyrinate a,c-diamide synthase.